The sequence spans 226 residues: Ribonuclease 3 (226 aa).

The 123-residue stretch at 7-129 (LPRLCRTLGY…IIGAIYLDSD (123 aa)) folds into the RNase III domain. Glu-42 provides a ligand contact to Mg(2+). Asp-46 is a catalytic residue. Mg(2+)-binding residues include Asp-115 and Glu-118. Glu-118 is an active-site residue. The 71-residue stretch at 156-226 (DAKTLLQEYL…AAQVLELLKK (71 aa)) folds into the DRBM domain.

Belongs to the ribonuclease III family. In terms of assembly, homodimer. It depends on Mg(2+) as a cofactor.

The protein resides in the cytoplasm. The catalysed reaction is Endonucleolytic cleavage to 5'-phosphomonoester.. Its function is as follows. Digests double-stranded RNA. Involved in the processing of primary rRNA transcript to yield the immediate precursors to the large and small rRNAs (23S and 16S). Processes some mRNAs, and tRNAs when they are encoded in the rRNA operon. Processes pre-crRNA and tracrRNA of type II CRISPR loci if present in the organism. The polypeptide is Ribonuclease 3 (Shewanella sp. (strain ANA-3)).